The chain runs to 212 residues: Ubiquitin-like protein MDY2 (212 aa).

The Ubiquitin-like domain occupies 74 to 152 (VHLTLKKIQA…TITVMIKPNP (79 aa)). A disordered region spans residues 150 to 177 (PNPTISKEPEAEKSTNSPAPAPPQELTV).

Interacts with GET4.

It is found in the cytoplasm. The protein localises to the cytosol. Its subcellular location is the nucleus. Functionally, required for efficient mating. Involved in the production of alpha-factor, the KAR9 and TUB1 location to the shmoo tip and nuclear migration into pheromone-induced shmoos. The protein is Ubiquitin-like protein MDY2 (MDY2) of Saccharomyces cerevisiae (strain ATCC 204508 / S288c) (Baker's yeast).